The primary structure comprises 174 residues: Co-chaperone protein HscB (174 aa).

The region spanning 2 to 74 (NYFTLFDLPR…LNRAIYFLCL (73 aa)) is the J domain.

Belongs to the HscB family. Interacts with HscA and stimulates its ATPase activity. Interacts with IscU.

Co-chaperone involved in the maturation of iron-sulfur cluster-containing proteins. Seems to help targeting proteins to be folded toward HscA. This chain is Co-chaperone protein HscB, found in Buchnera aphidicola subsp. Acyrthosiphon pisum (strain Tuc7).